The chain runs to 241 residues: tRNA (guanine-N(7)-)-methyltransferase (241 aa).

Residues G61, E84, R86, N117, A118, and L137 each contribute to the S-adenosyl-L-methionine site. Residue D140 is part of the active site. The alphaC helix stretch occupies residues 141–149; that stretch reads PHFKKTKHK. S-adenosyl-L-methionine contacts are provided by T215 and E217. The interval 215-223 is alpha6 helix; sequence TEEGKKVQR.

This sequence belongs to the class I-like SAM-binding methyltransferase superfamily. TrmB family. As to quaternary structure, catalytic component of the METTL1-WDR4 complex, composed of mettl1 and wdr4.

Its subcellular location is the nucleus. It carries out the reaction guanosine(46) in tRNA + S-adenosyl-L-methionine = N(7)-methylguanosine(46) in tRNA + S-adenosyl-L-homocysteine. The catalysed reaction is a guanosine in mRNA + S-adenosyl-L-methionine = an N(7)-methylguanosine in mRNA + S-adenosyl-L-homocysteine. It catalyses the reaction a guanosine in miRNA + S-adenosyl-L-methionine = an N(7)-methylguanosine in miRNA + S-adenosyl-L-homocysteine. It functions in the pathway tRNA modification; N(7)-methylguanine-tRNA biosynthesis. Catalytic component of METTL1-WDR4 methyltransferase complex that mediates the formation of N(7)-methylguanine in a subset of RNA species, such as tRNAs, mRNAs and microRNAs (miRNAs). Catalyzes the formation of N(7)-methylguanine at position 46 (m7G46) in a large subset of tRNAs that contain the 5'-RAGGU-3' motif within the variable loop. M7G46 interacts with C13-G22 in the D-loop to stabilize tRNA tertiary structure and protect tRNAs from decay. Also acts as a methyltransferase for a subset of internal N(7)-methylguanine in mRNAs. Internal N(7)-methylguanine methylation of mRNAs in response to stress promotes their relocalization to stress granules, thereby suppressing their translation. Also methylates a specific subset of miRNAs. The protein is tRNA (guanine-N(7)-)-methyltransferase (mettl1) of Danio rerio (Zebrafish).